Here is a 101-residue protein sequence, read N- to C-terminus: Small ribosomal subunit protein uS14 (101 aa).

The protein belongs to the universal ribosomal protein uS14 family. Part of the 30S ribosomal subunit. Contacts proteins S3 and S10.

Functionally, binds 16S rRNA, required for the assembly of 30S particles and may also be responsible for determining the conformation of the 16S rRNA at the A site. The sequence is that of Small ribosomal subunit protein uS14 from Shewanella putrefaciens (strain CN-32 / ATCC BAA-453).